Here is a 466-residue protein sequence, read N- to C-terminus: UDP-N-acetylmuramoylalanine--D-glutamate ligase (466 aa).

127–133 (GSNGKST) contributes to the ATP binding site.

It belongs to the MurCDEF family.

The protein resides in the cytoplasm. It catalyses the reaction UDP-N-acetyl-alpha-D-muramoyl-L-alanine + D-glutamate + ATP = UDP-N-acetyl-alpha-D-muramoyl-L-alanyl-D-glutamate + ADP + phosphate + H(+). It functions in the pathway cell wall biogenesis; peptidoglycan biosynthesis. Cell wall formation. Catalyzes the addition of glutamate to the nucleotide precursor UDP-N-acetylmuramoyl-L-alanine (UMA). This chain is UDP-N-acetylmuramoylalanine--D-glutamate ligase, found in Ruegeria pomeroyi (strain ATCC 700808 / DSM 15171 / DSS-3) (Silicibacter pomeroyi).